A 275-amino-acid polypeptide reads, in one-letter code: NH(3)-dependent NAD(+) synthetase (275 aa).

An ATP-binding site is contributed by 46–53 (GISGGQDS). Residue Asp52 participates in Mg(2+) binding. Arg140 is a binding site for deamido-NAD(+). Residue Thr160 coordinates ATP. Glu165 lines the Mg(2+) pocket. The deamido-NAD(+) site is built by Lys173 and Asp180. 2 residues coordinate ATP: Lys189 and Thr211. 260-261 (HK) serves as a coordination point for deamido-NAD(+).

This sequence belongs to the NAD synthetase family. In terms of assembly, homodimer.

It carries out the reaction deamido-NAD(+) + NH4(+) + ATP = AMP + diphosphate + NAD(+) + H(+). It participates in cofactor biosynthesis; NAD(+) biosynthesis; NAD(+) from deamido-NAD(+) (ammonia route): step 1/1. In terms of biological role, catalyzes the ATP-dependent amidation of deamido-NAD to form NAD. Uses ammonia as a nitrogen source. This is NH(3)-dependent NAD(+) synthetase from Escherichia coli O17:K52:H18 (strain UMN026 / ExPEC).